An 84-amino-acid polypeptide reads, in one-letter code: Putative antitoxin RelB4 (84 aa).

Its function is as follows. Antitoxin component of a type II toxin-antitoxin (TA) system. Its cognate toxin is RelE4 (Potential). This chain is Putative antitoxin RelB4 (relB4), found in Methanocaldococcus jannaschii (strain ATCC 43067 / DSM 2661 / JAL-1 / JCM 10045 / NBRC 100440) (Methanococcus jannaschii).